The sequence spans 218 residues: uncharacterized protein (218 aa).

This is an uncharacterized protein from Ureaplasma parvum serovar 3 (strain ATCC 700970).